A 772-amino-acid chain; its full sequence is MAPGGGGGRRDGWPARGRLLLAALLLLLWTRAASGQSSPQQSVILGMRLASCNKSCGMNPDGIIFVSEGSTVNLRLYGHRLGEISSNLISFTEVDDAETVHNSTNCLELTKDLVVQRLVNVSRGNTSGMLVVITKFLRRSENMKLYALCTRTRADGPWLKWTDKDSLLFMVEEHGRFLPLWLHILLVLVLLVLSGIFSGLNLGLMALDPMELRIVQNCGTEKERRYARKIEPIRRKGNYLLCSLLLGNVLVNTSLTILLDNLIGSGIMAVASSTIGIVIFGEILPQALCSRHGLAVGANTIVLTKIFMLLTFPLSFPISKLLDFVLGQEIRTVYNREKLMEMLKVTEPYNDLVKEELNMIQGALELRTKTVEDIMTQLHDCFMIRSDAILDFNTMSEIMESGYTRIPVFEDEQSNIVDILYVKDLAFVDPDDCTPLKTITRFYNHPVHFVFHDTKLDAMLEEFKKGKSHLAIVQKVNNEGEGDPFYEVLGLVTLEDVIEEIIKSEILDESDTYTDNRTRKRVSMKNKRDFSAFKDADNELKVKISPQLLLAAHRFLATEVPQFSPSLMSEKILLRLLKYPDVIQELRFDEHNKHCTRHYLYTRNKPADCFILILQGKVEVEAGKENMKFETGAFSYYGTMALSLAPPDRSPAHPTPLSRSASLSYPDRNTDMTPSSLAGSNQFGSCILGQYVSDFSVRALTDLQYIKVTRQQYQNGLLASRMDNSPQLTLDGCATCTENLSERPELPVVDETTTLLNERNLLLHRASQEGTI.

Topologically, residues 1-175 (MAPGGGGGRR…SLLFMVEEHG (175 aa)) are extracellular. An N-linked (GlcNAc...) asparagine glycan is attached at Asn-120. Residues 176–196 (RFLPLWLHILLVLVLLVLSGI) traverse the membrane as a helical segment. A CNNM transmembrane domain is found at 176-356 (RFLPLWLHIL…EPYNDLVKEE (181 aa)). The Cytoplasmic segment spans residues 197 to 237 (FSGLNLGLMALDPMELRIVQNCGTEKERRYARKIEPIRRKG). Positions 238–258 (NYLLCSLLLGNVLVNTSLTIL) form an intramembrane region, helical. Residues 259–261 (LDN) lie on the Cytoplasmic side of the membrane. The helical transmembrane segment at 262 to 282 (LIGSGIMAVASSTIGIVIFGE) threads the bilayer. Residues 283 to 290 (ILPQALCS) lie on the Extracellular side of the membrane. Residues 291–313 (RHGLAVGANTIVLTKIFMLLTFP) form a helical membrane-spanning segment. The Cytoplasmic segment spans residues 314–772 (LSFPISKLLD…LHRASQEGTI (459 aa)). CBS domains lie at 375–436 (MTQL…CTPL) and 443–509 (YNHP…ILDE). The tract at residues 647 to 676 (PDRSPAHPTPLSRSASLSYPDRNTDMTPSS) is disordered. A phosphoserine mark is found at Ser-658, Ser-662, and Ser-767.

This sequence belongs to the ACDP family. As to quaternary structure, interacts with COX11. In terms of tissue distribution, present in spinal cord dorsal horn neurons and in developing teeth (at protein level). In the tooth, higher expression is found in the ameloblasts during the transition and maturation phases of amelogenesis; reduced expression in the odontoblasts.

The protein localises to the cell membrane. Probable metal transporter. The interaction with the metal ion chaperone COX11 suggests that it may play a role in sensory neuron functions. May play a role in biomineralization and retinal function. The protein is Metal transporter CNNM4 (Cnnm4) of Rattus norvegicus (Rat).